Consider the following 382-residue polypeptide: Anhydro-N-acetylmuramic acid kinase (382 aa).

An ATP-binding site is contributed by 9 to 16 (GTSLDGID).

It belongs to the anhydro-N-acetylmuramic acid kinase family.

The enzyme catalyses 1,6-anhydro-N-acetyl-beta-muramate + ATP + H2O = N-acetyl-D-muramate 6-phosphate + ADP + H(+). Its pathway is amino-sugar metabolism; 1,6-anhydro-N-acetylmuramate degradation. It functions in the pathway cell wall biogenesis; peptidoglycan recycling. In terms of biological role, catalyzes the specific phosphorylation of 1,6-anhydro-N-acetylmuramic acid (anhMurNAc) with the simultaneous cleavage of the 1,6-anhydro ring, generating MurNAc-6-P. Is required for the utilization of anhMurNAc either imported from the medium or derived from its own cell wall murein, and thus plays a role in cell wall recycling. In Bacillus cereus (strain AH187), this protein is Anhydro-N-acetylmuramic acid kinase.